The chain runs to 360 residues: Phospho-N-acetylmuramoyl-pentapeptide-transferase (360 aa).

10 consecutive transmembrane segments (helical) span residues 21 to 41 (YLTFRSVLALLTALLLSLWIG), 73 to 93 (TMGGLMILATITVSTLLWGDL), 94 to 114 (SNPYIWFSLFVLLGYGAIGFV), 132 to 152 (WKYFWLSLVSLIAIFGMYALG), 168 to 188 (IMPQLGLFYVVLAYFVIVGTS), 199 to 219 (GLAIMPTVFVAGAFAIIAWAT), 239 to 259 (LVIFCTAIVGAGLGFLWFNTY), 263 to 283 (VFMGDVGSLALGGALGTIAVL), 288 to 308 (FLLVIMGGVFVMETVSVILQV), and 338 to 358 (VIIRFWIISLMLVLFGLVTLK).

It belongs to the glycosyltransferase 4 family. MraY subfamily. It depends on Mg(2+) as a cofactor.

The protein localises to the cell inner membrane. It catalyses the reaction UDP-N-acetyl-alpha-D-muramoyl-L-alanyl-gamma-D-glutamyl-meso-2,6-diaminopimeloyl-D-alanyl-D-alanine + di-trans,octa-cis-undecaprenyl phosphate = di-trans,octa-cis-undecaprenyl diphospho-N-acetyl-alpha-D-muramoyl-L-alanyl-D-glutamyl-meso-2,6-diaminopimeloyl-D-alanyl-D-alanine + UMP. It participates in cell wall biogenesis; peptidoglycan biosynthesis. Its function is as follows. Catalyzes the initial step of the lipid cycle reactions in the biosynthesis of the cell wall peptidoglycan: transfers peptidoglycan precursor phospho-MurNAc-pentapeptide from UDP-MurNAc-pentapeptide onto the lipid carrier undecaprenyl phosphate, yielding undecaprenyl-pyrophosphoryl-MurNAc-pentapeptide, known as lipid I. In Mannheimia succiniciproducens (strain KCTC 0769BP / MBEL55E), this protein is Phospho-N-acetylmuramoyl-pentapeptide-transferase.